The primary structure comprises 340 residues: Integral membrane protein SED5 (340 aa).

The Cytoplasmic portion of the chain corresponds to 1–319; sequence MNIKDRTSEF…KYFDRIKSNR (319 aa). The interval 31–51 is disordered; sequence RLQEKESENFANNTTGNGKSV. The segment covering 39–51 has biased composition (polar residues); it reads NFANNTTGNGKSV. Positions 146 to 173 form a coiled coil; the sequence is LNTQMKNISGSFKDVLEERQRLEMANKD. The segment at 180-231 is disordered; sequence TDTGHAPADDQTQSNHAADLTTYNNSNPFMTSLLDESSEKNNNSSNQGELSF. Polar residues predominate over residues 189 to 209; the sequence is DQTQSNHAADLTTYNNSNPFM. Positions 249 to 311 constitute a t-SNARE coiled-coil homology domain; it reads NVYLQERNRA…SGAQRELLKY (63 aa). The helical; Anchor for type IV membrane protein transmembrane segment at 320 to 340 threads the bilayer; sequence WLAAKVFFIIFVFFVIWVLVN.

This sequence belongs to the syntaxin family. In terms of assembly, interacts with SLY1, STF1, SFB3 and GOS1.

The protein resides in the membrane. It is found in the golgi apparatus membrane. Functionally, required for vesicular transport between the endoplasmic reticulum and the Golgi complex. Acts as a target organelle soluble NSF attachment protein receptor (t-SNARE). In Saccharomyces cerevisiae (strain ATCC 204508 / S288c) (Baker's yeast), this protein is Integral membrane protein SED5 (SED5).